The chain runs to 675 residues: Polyphosphate kinase (675 aa).

ATP is bound at residue Asn-42. Mg(2+) is bound by residues Arg-372 and Arg-401. The active-site Phosphohistidine intermediate is His-431. Residues Tyr-464, Arg-558, and His-586 each contribute to the ATP site.

Belongs to the polyphosphate kinase 1 (PPK1) family. The cofactor is Mg(2+). In terms of processing, an intermediate of this reaction is the autophosphorylated ppk in which a phosphate is covalently linked to a histidine residue through a N-P bond.

The enzyme catalyses [phosphate](n) + ATP = [phosphate](n+1) + ADP. Catalyzes the reversible transfer of the terminal phosphate of ATP to form a long-chain polyphosphate (polyP). In Helicobacter pylori (strain J99 / ATCC 700824) (Campylobacter pylori J99), this protein is Polyphosphate kinase.